Consider the following 450-residue polypeptide: tRNA-2-methylthio-N(6)-dimethylallyladenosine synthase (450 aa).

An MTTase N-terminal domain is found at 2-119; that stretch reads KKVFVKTYGC…LPDLIARRQR (118 aa). [4Fe-4S] cluster is bound by residues Cys11, Cys48, Cys82, Cys156, Cys160, and Cys163. The 234-residue stretch at 142–375 folds into the Radical SAM core domain; that stretch reads RVEGPSAFVS…QATIEENVQR (234 aa). The TRAM domain occupies 378-448; that stretch reads QGMVGTVQRI…PHSLRGEIVV (71 aa).

The protein belongs to the methylthiotransferase family. MiaB subfamily. In terms of assembly, monomer. It depends on [4Fe-4S] cluster as a cofactor.

It localises to the cytoplasm. The enzyme catalyses N(6)-dimethylallyladenosine(37) in tRNA + (sulfur carrier)-SH + AH2 + 2 S-adenosyl-L-methionine = 2-methylsulfanyl-N(6)-dimethylallyladenosine(37) in tRNA + (sulfur carrier)-H + 5'-deoxyadenosine + L-methionine + A + S-adenosyl-L-homocysteine + 2 H(+). In terms of biological role, catalyzes the methylthiolation of N6-(dimethylallyl)adenosine (i(6)A), leading to the formation of 2-methylthio-N6-(dimethylallyl)adenosine (ms(2)i(6)A) at position 37 in tRNAs that read codons beginning with uridine. This is tRNA-2-methylthio-N(6)-dimethylallyladenosine synthase from Cupriavidus taiwanensis (strain DSM 17343 / BCRC 17206 / CCUG 44338 / CIP 107171 / LMG 19424 / R1) (Ralstonia taiwanensis (strain LMG 19424)).